The sequence spans 156 residues: Small ribosomal subunit protein uS7 (156 aa).

Belongs to the universal ribosomal protein uS7 family. As to quaternary structure, part of the 30S ribosomal subunit. Contacts proteins S9 and S11.

Its function is as follows. One of the primary rRNA binding proteins, it binds directly to 16S rRNA where it nucleates assembly of the head domain of the 30S subunit. Is located at the subunit interface close to the decoding center, probably blocks exit of the E-site tRNA. The chain is Small ribosomal subunit protein uS7 from Streptomyces avermitilis (strain ATCC 31267 / DSM 46492 / JCM 5070 / NBRC 14893 / NCIMB 12804 / NRRL 8165 / MA-4680).